The sequence spans 371 residues: Queuine tRNA-ribosyltransferase (371 aa).

Catalysis depends on Asp89, which acts as the Proton acceptor. Substrate-binding positions include 89 to 93 (DSGGF), Asp143, Gln185, and Gly212. Residues 243 to 249 (GVGKPED) form an RNA binding region. Asp262 serves as the catalytic Nucleophile. Positions 267 to 271 (TRNAR) are RNA binding; important for wobble base 34 recognition. Positions 300, 302, 305, and 331 each coordinate Zn(2+).

The protein belongs to the queuine tRNA-ribosyltransferase family. Homodimer. Within each dimer, one monomer is responsible for RNA recognition and catalysis, while the other monomer binds to the replacement base PreQ1. It depends on Zn(2+) as a cofactor.

It catalyses the reaction 7-aminomethyl-7-carbaguanine + guanosine(34) in tRNA = 7-aminomethyl-7-carbaguanosine(34) in tRNA + guanine. The protein operates within tRNA modification; tRNA-queuosine biosynthesis. Catalyzes the base-exchange of a guanine (G) residue with the queuine precursor 7-aminomethyl-7-deazaguanine (PreQ1) at position 34 (anticodon wobble position) in tRNAs with GU(N) anticodons (tRNA-Asp, -Asn, -His and -Tyr). Catalysis occurs through a double-displacement mechanism. The nucleophile active site attacks the C1' of nucleotide 34 to detach the guanine base from the RNA, forming a covalent enzyme-RNA intermediate. The proton acceptor active site deprotonates the incoming PreQ1, allowing a nucleophilic attack on the C1' of the ribose to form the product. After dissociation, two additional enzymatic reactions on the tRNA convert PreQ1 to queuine (Q), resulting in the hypermodified nucleoside queuosine (7-(((4,5-cis-dihydroxy-2-cyclopenten-1-yl)amino)methyl)-7-deazaguanosine). The protein is Queuine tRNA-ribosyltransferase of Pseudomonas putida (strain ATCC 47054 / DSM 6125 / CFBP 8728 / NCIMB 11950 / KT2440).